The sequence spans 219 residues: Pollen-specific protein SF3 (219 aa).

LIM zinc-binding domains are found at residues 9-109 and 110-167; these read QKCT…TRDK and CNAC…QLFK. Positions 181 to 219 are disordered; sequence VAAPAESETQNTETQNAETQNADTQNADTQNTETQNGSV. A compositionally biased stretch (low complexity) spans 185 to 202; sequence AESETQNTETQNAETQNA. Residues 203 to 219 are compositionally biased toward polar residues; the sequence is DTQNADTQNTETQNGSV.

As to expression, pollen.

Its function is as follows. Could possibly involved in controlling pollen-specific processes such as male gamete maturation, pollen tube formation, or even fertilization. This Helianthus annuus (Common sunflower) protein is Pollen-specific protein SF3 (SF3).